The sequence spans 421 residues: Atrochrysone carboxyl ACP thioesterase (421 aa).

Residues His207, His209, Asp211, and His212 each coordinate Zn(2+). Residue Asp211 is the Proton donor/acceptor of the active site.

The protein belongs to the metallo-beta-lactamase superfamily. Zn(2+) is required as a cofactor. In terms of tissue distribution, specifically expressed in conidia.

The catalysed reaction is atrochrysone carboxyl-[ACP] + H2O = atrochrysone carboxylate + holo-[ACP] + H(+). It functions in the pathway secondary metabolite biosynthesis. Functionally, atrochrysone carboxyl ACP thioesterase; part of the gene cluster that mediates the biosynthesis of trypacidin, a mycotoxin with antiprotozoal activity and that plays a role in the infection process. The pathway begins with the synthesis of atrochrysone thioester by the polyketide synthase (PKS) tpcC. The atrochrysone carboxyl ACP thioesterase tpcB then breaks the thioester bond and releases the atrochrysone carboxylic acid from tpcC. The decarboxylase tpcK converts atrochrysone carboxylic acid to atrochrysone which is further reduced into emodin anthrone. The next step is performed by the emodin anthrone oxygenase tpcL that catalyzes the oxidation of emodin anthrone to emodin. Emodin O-methyltransferase encoded by tpcA catalyzes methylation of the 8-hydroxy group of emodin to form questin. Ring cleavage of questin by questin oxidase tpcI leads to desmethylsulochrin via several intermediates including questin epoxide. Another methylation step catalyzed by tpcM leads to the formation of sulochrin which is further converted to monomethylsulfochrin by tpcH. Finally, the tpcJ catalyzes the conversion of monomethylsulfochrin to trypacidin. Trypacidin is toxic for human pulmonary and bronchial epithelial cells by initiating the intracellular formation of nitric oxide (NO) and hydrogen peroxide (H(2)O(2)), thus triggering host necrotic cell death. The trypacidin pathway is also able to produce endocrocin via a distinct route from the endocrocin Enc pathway. This Aspergillus fumigatus (strain ATCC MYA-4609 / CBS 101355 / FGSC A1100 / Af293) (Neosartorya fumigata) protein is Atrochrysone carboxyl ACP thioesterase.